A 338-amino-acid polypeptide reads, in one-letter code: Patr class I histocompatibility antigen, alpha chain G (338 aa).

Residues 1–24 (MVVMAPRTLFLLLSGALTLTETWA) form the signal peptide. Residues 25–114 (GSHSMRYFSA…LRGYYNQSEA (90 aa)) are alpha-1. Over 25–308 (GSHSMRYFSA…KQSSLPTIPI (284 aa)) the chain is Extracellular. N-linked (GlcNAc...) asparagine glycosylation is present at Asn110. The segment at 115–206 (SSHTLQWMIG…ENGKEMLQRA (92 aa)) is alpha-2. 2 cysteine pairs are disulfide-bonded: Cys125/Cys188 and Cys227/Cys283. Positions 207–298 (DPPKTHVTHH…GLPEPLMLRW (92 aa)) are alpha-3. The Ig-like C1-type domain occupies 209–299 (PKTHVTHHPV…LPEPLMLRWK (91 aa)). The tract at residues 299–308 (KQSSLPTIPI) is connecting peptide. A helical membrane pass occupies residues 309 to 332 (MGIVAGLVVLAAVVTGAAVAAVLW). The Cytoplasmic segment spans residues 333-338 (RKKSSD).

Belongs to the MHC class I family. As to quaternary structure, heterodimer of an alpha chain and a beta chain (beta-2-microglobulin). Homodimer; disulfide-linked. Binds to LILRB1 and LILRB2.

Its subcellular location is the cell membrane. Functionally, involved in the presentation of foreign antigens to the immune system. This Pan troglodytes (Chimpanzee) protein is Patr class I histocompatibility antigen, alpha chain G (Patr-G).